The primary structure comprises 130 residues: Small ribosomal subunit protein uS8 (130 aa).

The protein belongs to the universal ribosomal protein uS8 family. Part of the 30S ribosomal subunit.

One of the primary rRNA binding proteins, it binds directly to 16S rRNA central domain where it helps coordinate assembly of the platform of the 30S subunit. The chain is Small ribosomal subunit protein uS8 from Methanococcus voltae.